A 354-amino-acid chain; its full sequence is Protein-glutamate methylesterase/protein-glutamine glutaminase of group 3 operon (354 aa).

The 119-residue stretch at 3 to 121 (RILLATSTVE…MQLEQPAIEK (119 aa)) folds into the Response regulatory domain. Positions 158-340 (PIGIVGIAAS…LESIAENITA (183 aa)) constitute a CheB-type methylesterase domain. Residues S167, H194, and D287 contribute to the active site.

The protein belongs to the CheB family.

It is found in the cytoplasm. It carries out the reaction [protein]-L-glutamate 5-O-methyl ester + H2O = L-glutamyl-[protein] + methanol + H(+). It catalyses the reaction L-glutaminyl-[protein] + H2O = L-glutamyl-[protein] + NH4(+). Functionally, involved in chemotaxis. Part of a chemotaxis signal transduction system that modulates chemotaxis in response to various stimuli. Catalyzes the demethylation of specific methylglutamate residues introduced into the chemoreceptors (methyl-accepting chemotaxis proteins or MCP) by CheR. Also mediates the irreversible deamidation of specific glutamine residues to glutamic acid. This chain is Protein-glutamate methylesterase/protein-glutamine glutaminase of group 3 operon, found in Rhizobium meliloti (strain 1021) (Ensifer meliloti).